The chain runs to 109 residues: MSDTEYLTRAEAVLAAVERTVDDANDGDHDIDLERNGSVLTLTFENGSKIIVNLQPPMKEVWIAAKAGGFHYRFIDGEWRDTRTGTEFFSALTEYATQQAGLPITFNAP.

This sequence belongs to the frataxin family.

Functionally, involved in iron-sulfur (Fe-S) cluster assembly. May act as a regulator of Fe-S biogenesis. This is Iron-sulfur cluster assembly protein CyaY from Burkholderia lata (strain ATCC 17760 / DSM 23089 / LMG 22485 / NCIMB 9086 / R18194 / 383).